Reading from the N-terminus, the 273-residue chain is Ribosomal RNA small subunit methyltransferase A (273 aa).

Positions 18, 20, 45, 66, 91, and 113 each coordinate S-adenosyl-L-methionine.

Belongs to the class I-like SAM-binding methyltransferase superfamily. rRNA adenine N(6)-methyltransferase family. RsmA subfamily.

The protein localises to the cytoplasm. It catalyses the reaction adenosine(1518)/adenosine(1519) in 16S rRNA + 4 S-adenosyl-L-methionine = N(6)-dimethyladenosine(1518)/N(6)-dimethyladenosine(1519) in 16S rRNA + 4 S-adenosyl-L-homocysteine + 4 H(+). Functionally, specifically dimethylates two adjacent adenosines (A1518 and A1519) in the loop of a conserved hairpin near the 3'-end of 16S rRNA in the 30S particle. May play a critical role in biogenesis of 30S subunits. This is Ribosomal RNA small subunit methyltransferase A from Escherichia coli O17:K52:H18 (strain UMN026 / ExPEC).